The following is a 326-amino-acid chain: Photosystem II assembly factor Ycf39 (326 aa).

It belongs to the NmrA-type oxidoreductase family. Ycf39 subfamily. In terms of assembly, purified in several chlorophyll- and carotenoid-containing complexes, including photosystem II (PSII) assembly intermediate complex RCII* (iD1, D1, D2, PsbE, PsbF, PsbI, Ycf39, Ycf48, HliC and HliD) and the Ycf39-Hlip complex (Ycf39, HliC, HliD and pigments). Tagged protein does not pull down mature PSII.

The protein resides in the cellular thylakoid membrane. Its function is as follows. Requires HliD to bind pigments. The Ycf39-Hlip complex binds D1 at an early stage of PSII assembly along with Ycf48, ribosomes and ChlG, the last enzyme in chlorophyll biosynthesis; it may be involved in chlorophyll reuse and delivery to D1 in the initial stages of PSII assembly. The Ycf39-Hlip complex efficiently quenches chlorophyll fluorescence, contributing to photoprotection. The sequence is that of Photosystem II assembly factor Ycf39 from Synechocystis sp. (strain ATCC 27184 / PCC 6803 / Kazusa).